The primary structure comprises 618 residues: Methionine--tRNA ligase (618 aa).

The 'HIGH' region signature appears at 12–22 (YYVNAEPHLGH). The Zn(2+) site is built by C127, C130, C144, and H147. The short motif at 297-301 (KMSKT) is the 'KMSKS' region element. K300 is an ATP binding site. The tRNA-binding domain occupies 518-618 (DFAKVELRVA…GEVPPGAVVK (101 aa)).

It belongs to the class-I aminoacyl-tRNA synthetase family. MetG type 2A subfamily. Homodimer. The cofactor is Zn(2+).

The protein resides in the cytoplasm. The catalysed reaction is tRNA(Met) + L-methionine + ATP = L-methionyl-tRNA(Met) + AMP + diphosphate. Is required not only for elongation of protein synthesis but also for the initiation of all mRNA translation through initiator tRNA(fMet) aminoacylation. The sequence is that of Methionine--tRNA ligase (metG) from Thermus thermophilus (strain ATCC 27634 / DSM 579 / HB8).